The chain runs to 247 residues: VQ motif-containing protein 4 (247 aa).

The disordered stretch occupies residues 1–128; that stretch reads MENSPRYREA…SSSSASGFRL (128 aa). The residue at position 16 (serine 16) is a Phosphoserine. The span at 21-37 shows a compositional bias: low complexity; the sequence is NSNNSCGMSSSSESNKP. 2 stretches are compositionally biased toward polar residues: residues 48-75 and 87-106; these read RSESGNPYPTTFVQADTSSFKQVVQMLT and LKPNPTHHQPDPRSTPSSFS. The VQ signature appears at 67–76; that stretch reads FKQVVQMLTG. Phosphoserine occurs at positions 106, 155, 163, 165, and 175. Threonine 178 carries the post-translational modification Phosphothreonine. The disordered stretch occupies residues 184-247; that stretch reads PFDRSGSSNQ…VSGSSSASTS (64 aa). Serine 194 bears the Phosphoserine mark. A compositionally biased stretch (basic and acidic residues) spans 200–210; sequence AEEKAMKERGF. Phosphoserine is present on serine 215. Phosphothreonine occurs at positions 219 and 234. 3 positions are modified to phosphoserine: serine 235, serine 239, and serine 243. Over residues 236–247 the composition is skewed to polar residues; that stretch reads PRVSGSSSASTS.

In terms of assembly, interacts with MPK3 and MPK6. In terms of processing, phosphorylated on serine and threonine residues by MPK6 following treatment with the pathogen-associated molecular pattern (PAMP) flg22. MAP kinase-mediated phosphorylation after PAMP elicitation causes degradation of VQ4, allowing WRKY33 to promote transcription from defense genes.

It is found in the nucleus. Acts as a negative regulator of WRKY33 transcription factor activity in the promotion of defense gene expression. Acts as a negative regulator of pathogen-associated molecular pattern (PAMP)-induced responses to modulate resistance to pathogens. The sequence is that of VQ motif-containing protein 4 from Arabidopsis thaliana (Mouse-ear cress).